The chain runs to 798 residues: Translation initiation factor IF-2 (798 aa).

The disordered stretch occupies residues 40 to 207 (SEQETKLRQA…QQESAKPAVP (168 aa)). Over residues 57–186 (NTQSKATNNQ…RNNFNNQNRN (130 aa)) the composition is skewed to low complexity. The segment covering 187–196 (RFNKKGKKGK) has biased composition (basic residues). One can recognise a tr-type G domain in the interval 300-469 (TRPPVVTIMG…LLIAEVEDLK (170 aa)). The G1 stretch occupies residues 309-316 (GHVDHGKT). GTP is bound at residue 309 to 316 (GHVDHGKT). A G2 region spans residues 334 to 338 (GITQH). A G3 region spans residues 355–358 (DTPG). GTP contacts are provided by residues 355–359 (DTPGH) and 409–412 (NKID). The G4 stretch occupies residues 409 to 412 (NKID). The G5 stretch occupies residues 445–447 (SAK).

It belongs to the TRAFAC class translation factor GTPase superfamily. Classic translation factor GTPase family. IF-2 subfamily.

It is found in the cytoplasm. One of the essential components for the initiation of protein synthesis. Protects formylmethionyl-tRNA from spontaneous hydrolysis and promotes its binding to the 30S ribosomal subunits. Also involved in the hydrolysis of GTP during the formation of the 70S ribosomal complex. The sequence is that of Translation initiation factor IF-2 from Enterococcus faecalis (strain ATCC 700802 / V583).